A 431-amino-acid polypeptide reads, in one-letter code: TDP-daunosamine transferase DnrS (431 aa).

A signal peptide spans 1–23 (MKVLVTAFAMDAHFNGVVPLAWA).

The protein belongs to the glycosyltransferase 28 family.

It carries out the reaction dTDP-beta-L-daunosamine + epsilon-rhodomycinone = rhodomycin D + dTDP + H(+). The protein operates within antibiotic biosynthesis; daunorubicin biosynthesis. Its pathway is antibiotic biosynthesis; carminomycin biosynthesis. Involved in the biosynthesis of the anthracyclines carminomycin and daunorubicin (daunomycin) which are aromatic polyketide antibiotics that exhibit high cytotoxicity and are widely applied in the chemotherapy of a variety of cancers. Catalyzes the addition of the TDP activated glycoside, L-daunosamine-TDP (2,3,6-trideoxy-3-aminohexose-TDP) at position C-7 of epsilon-rhodomycinone to yield rhodomycin D. Glycosylation is a prerequisite for biological activity of anthracyclines and requires DnrQ which seems to act as an activator. In Streptomyces peucetius, this protein is TDP-daunosamine transferase DnrS (dnrS).